A 469-amino-acid chain; its full sequence is Protein RUFY3 (469 aa).

2 positions are modified to phosphothreonine: Thr-5 and Thr-12. Residues Ser-34 and Ser-49 each carry the phosphoserine modification. A Phosphothreonine modification is found at Thr-51. Residues 95–227 (DSDYAPLQQF…IDANFCMKGE (133 aa)) enclose the RUN domain. Coiled-coil stretches lie at residues 271 to 362 (NRHL…VEKE) and 422 to 463 (KSEL…AANK).

Interacts with PAK1. Interacts (via C-terminus) with Ras-related Rab-5 proteins. Interacts (via C-terminus) with Ras-related Rap-2 proteins. Interacts with PIK3CA and PIK3R1. Interacts (via N-terminus) with FSCN1; this interaction induces neuron axon development. Interacts with DBN1. Interacts (via the second coiled coil) with GTP-, but not GDP-bound ARL8A and ARL8B. Interacts with dynactin/DCTN1 and the dynein intermediate chain DYNC1I1/2. Directly interacts with DYNC1LI1. Post-translationally, phosphorylated by PAK1.

It localises to the cytoplasm. The protein resides in the endomembrane system. It is found in the cell projection. Its subcellular location is the invadopodium. The protein localises to the growth cone. It localises to the perikaryon. The protein resides in the filopodium. It is found in the lamellipodium. Its subcellular location is the lysosome. In terms of biological role, ARL8 effector that promotes the coupling of endolysosomes to dynein-dynactin for retrograde transport along microtubules. Acts by binding both GTP-bound ARL8 and dynein-dynactin. In nonneuronal cells, promotes concentration of endolysosomes in the juxtanuclear area. In hippocampal neurons, drives retrograde transport of endolysosomes from the axon to the soma. Plays a role in the generation of neuronal polarity formation and axon growth. Implicated in the formation of a single axon by developing neurons. May inhibit the formation of additional axons by inhibition of PI3K in minor neuronal processes. Plays a role in the formation of F-actin-enriched protrusive structures at the cell periphery. Plays a role in cytoskeletal organization by regulating the subcellular localization of FSCN1 and DBN1 at axonal growth cones. This is Protein RUFY3 from Pongo abelii (Sumatran orangutan).